Reading from the N-terminus, the 257-residue chain is MSDILEKIAAYKRDEVAVRKAAQPTIAPPAEAPRGFRAALTRAHAPGRLALIAEIKKASPSKGLIREDFDPPALARAYEAGGAACLSVLTDGPSFQGDDSYLAAARSAVRLPCLRKEFLVDPWQVAESRSLGADAILVILAMVDDVLAAELMAEAQRLGMDALVEVHDEAEMARAGALGADLIGVNNRNLRTFEVDLSTTERLATMAPAGALLVTESGIFTPADVARLERCGAQAMLVGESLMRQADVTAATRALLG.

Belongs to the TrpC family.

The enzyme catalyses 1-(2-carboxyphenylamino)-1-deoxy-D-ribulose 5-phosphate + H(+) = (1S,2R)-1-C-(indol-3-yl)glycerol 3-phosphate + CO2 + H2O. The protein operates within amino-acid biosynthesis; L-tryptophan biosynthesis; L-tryptophan from chorismate: step 4/5. The polypeptide is Indole-3-glycerol phosphate synthase (Phenylobacterium zucineum (strain HLK1)).